Reading from the N-terminus, the 436-residue chain is Adenylosuccinate synthetase (436 aa).

GTP contacts are provided by residues 12–18 (GDEGKGK) and 40–42 (GHT). Catalysis depends on Asp13, which acts as the Proton acceptor. Positions 13 and 40 each coordinate Mg(2+). IMP contacts are provided by residues 13 to 16 (DEGK), 38 to 41 (NAGH), Thr128, Arg142, Gln223, Thr238, and Arg302. The active-site Proton donor is His41. Substrate is bound at residue 298 to 304 (TTTGRRR). Residues Arg304, 330 to 332 (KLD), and 412 to 414 (SLG) each bind GTP.

The protein belongs to the adenylosuccinate synthetase family. In terms of assembly, homodimer. The cofactor is Mg(2+).

It is found in the cytoplasm. It carries out the reaction IMP + L-aspartate + GTP = N(6)-(1,2-dicarboxyethyl)-AMP + GDP + phosphate + 2 H(+). It functions in the pathway purine metabolism; AMP biosynthesis via de novo pathway; AMP from IMP: step 1/2. Plays an important role in the de novo pathway of purine nucleotide biosynthesis. Catalyzes the first committed step in the biosynthesis of AMP from IMP. This Prochlorococcus marinus subsp. pastoris (strain CCMP1986 / NIES-2087 / MED4) protein is Adenylosuccinate synthetase.